The chain runs to 397 residues: Tryptophan synthase beta chain (397 aa).

At Lys91 the chain carries N6-(pyridoxal phosphate)lysine.

This sequence belongs to the TrpB family. Tetramer of two alpha and two beta chains. Pyridoxal 5'-phosphate serves as cofactor.

It catalyses the reaction (1S,2R)-1-C-(indol-3-yl)glycerol 3-phosphate + L-serine = D-glyceraldehyde 3-phosphate + L-tryptophan + H2O. The protein operates within amino-acid biosynthesis; L-tryptophan biosynthesis; L-tryptophan from chorismate: step 5/5. Its function is as follows. The beta subunit is responsible for the synthesis of L-tryptophan from indole and L-serine. This chain is Tryptophan synthase beta chain, found in Bacillus thuringiensis (strain Al Hakam).